We begin with the raw amino-acid sequence, 553 residues long: Urocanate hydratase (553 aa).

Residues 45–46 (GG), Q123, 169–171 (GMG), D189, R194, 235–236 (NA), 256–260 (QTSAH), 266–267 (YV), Y315, and G485 each bind NAD(+).

Belongs to the urocanase family. The cofactor is NAD(+).

It is found in the cytoplasm. The enzyme catalyses 4-imidazolone-5-propanoate = trans-urocanate + H2O. The protein operates within amino-acid degradation; L-histidine degradation into L-glutamate; N-formimidoyl-L-glutamate from L-histidine: step 2/3. Catalyzes the conversion of urocanate to 4-imidazolone-5-propionate. This is Urocanate hydratase from Staphylococcus aureus (strain Mu50 / ATCC 700699).